Consider the following 471-residue polypeptide: Adenosylhomocysteinase (471 aa).

The substrate site is built by Thr-60, Asp-135, and Glu-196. NAD(+) is bound at residue 197-199 (TTT). Substrate-binding residues include Lys-226 and Asp-230. NAD(+)-binding positions include Asn-231, 260–265 (GYGDVG), Glu-283, Asn-318, 339–341 (IGH), and Asn-387.

This sequence belongs to the adenosylhomocysteinase family. Requires NAD(+) as cofactor.

The protein resides in the cytoplasm. It catalyses the reaction S-adenosyl-L-homocysteine + H2O = L-homocysteine + adenosine. It functions in the pathway amino-acid biosynthesis; L-homocysteine biosynthesis; L-homocysteine from S-adenosyl-L-homocysteine: step 1/1. Its function is as follows. May play a key role in the regulation of the intracellular concentration of adenosylhomocysteine. In Chlorobium phaeovibrioides (strain DSM 265 / 1930) (Prosthecochloris vibrioformis (strain DSM 265)), this protein is Adenosylhomocysteinase.